The chain runs to 205 residues: HTH-type transcriptional regulator PksA (205 aa).

The region spanning 8–68 (EKRRKQIAEA…FAMKLVQEKV (61 aa)) is the HTH tetR-type domain. Residues 31-50 (SARNIAKEAGLSLGALRHYF) constitute a DNA-binding region (H-T-H motif).

Functionally, transcriptional regulation of the polyketide synthase operon. The polypeptide is HTH-type transcriptional regulator PksA (pksA) (Bacillus subtilis (strain 168)).